A 396-amino-acid polypeptide reads, in one-letter code: Alpha-galactosidase 2 (396 aa).

Positions methionine 1–glycine 25 are cleaved as a signal peptide. 2 cysteine pairs are disulfide-bonded: cysteine 52-cysteine 84 and cysteine 132-cysteine 163. N-linked (GlcNAc...) asparagine glycosylation occurs at asparagine 55. Residues aspartate 82–aspartate 83 and lysine 159 each bind substrate. Residue aspartate 161 is the Nucleophile of the active site. Substrate is bound by residues glutamate 194–glutamate 198, arginine 212, and aspartate 216. Residue aspartate 216 is the Proton donor of the active site. N-linked (GlcNAc...) asparagine glycosylation is found at asparagine 343 and asparagine 354.

This sequence belongs to the glycosyl hydrolase 27 family. As to quaternary structure, homodimer.

The protein localises to the secreted. Its subcellular location is the cell wall. It localises to the extracellular space. It is found in the apoplast. The enzyme catalyses Hydrolysis of terminal, non-reducing alpha-D-galactose residues in alpha-D-galactosides, including galactose oligosaccharides, galactomannans and galactolipids.. In terms of biological role, may regulate leaf (and possibly other organ) development by functioning in cell wall loosening and cell wall expansion. The polypeptide is Alpha-galactosidase 2 (Arabidopsis thaliana (Mouse-ear cress)).